The following is a 526-amino-acid chain: Probable 1,4-alpha-glucan branching enzyme MT3115 (526 aa).

The active-site Nucleophile is glutamate 205. 2 residues coordinate substrate: arginine 251 and glycine 268. The active-site Proton donor is the aspartate 344. Substrate-binding residues include tryptophan 396 and aspartate 462.

Belongs to the glycosyl hydrolase 57 family.

It carries out the reaction Transfers a segment of a (1-&gt;4)-alpha-D-glucan chain to a primary hydroxy group in a similar glucan chain.. In terms of biological role, catalyzes the formation of branch points in alpha-glucans by cleavage of an alpha-1,4 glycosidic bond and subsequent transfer of the cleaved-off oligosaccharide to a new alpha-1,6 position. Is probably involved in the biosynthesis of 6-O-methylglucosyl lipopolysaccharides (MGLP). This is Probable 1,4-alpha-glucan branching enzyme MT3115 from Mycobacterium tuberculosis (strain CDC 1551 / Oshkosh).